A 151-amino-acid polypeptide reads, in one-letter code: UPF0178 protein Suden_0449 (151 aa).

This sequence belongs to the UPF0178 family.

The polypeptide is UPF0178 protein Suden_0449 (Sulfurimonas denitrificans (strain ATCC 33889 / DSM 1251) (Thiomicrospira denitrificans (strain ATCC 33889 / DSM 1251))).